We begin with the raw amino-acid sequence, 79 residues long: UPF0291 protein BH2353 (79 aa).

A disordered region spans residues 57–79 (GAGNDVTPDKLKQSKNKYRNDIH). The segment covering 63–79 (TPDKLKQSKNKYRNDIH) has biased composition (basic and acidic residues).

Belongs to the UPF0291 family.

It localises to the cytoplasm. The sequence is that of UPF0291 protein BH2353 from Halalkalibacterium halodurans (strain ATCC BAA-125 / DSM 18197 / FERM 7344 / JCM 9153 / C-125) (Bacillus halodurans).